The chain runs to 211 residues: MIQFLQGQVVTVTKNIQNRWFLILSVNGVGYELQVPHSLAQQWTPPPPEPQQVFTHLLVRQDQIALFGFGRLAERDLFGQLMGVTGIGAQLAIALIETLGLEGLVQAVVTGNVKQLCQTPGVGKKGAERLALELKTKLSQWHKLQMGTGETDSTLPTTALLEDLEMTLLALGYTQTEIQQAIAMVSQVPDVAQSEDPEVWIRQAIGWLSDH.

Residues 1–70 are domain I; that stretch reads MIQFLQGQVV…QDQIALFGFG (70 aa). The interval 71 to 149 is domain II; that stretch reads RLAERDLFGQ…QWHKLQMGTG (79 aa). Residues 150 to 158 are flexible linker; the sequence is ETDSTLPTT. The tract at residues 158–211 is domain III; that stretch reads TALLEDLEMTLLALGYTQTEIQQAIAMVSQVPDVAQSEDPEVWIRQAIGWLSDH.

It belongs to the RuvA family. Homotetramer. Forms an RuvA(8)-RuvB(12)-Holliday junction (HJ) complex. HJ DNA is sandwiched between 2 RuvA tetramers; dsDNA enters through RuvA and exits via RuvB. An RuvB hexamer assembles on each DNA strand where it exits the tetramer. Each RuvB hexamer is contacted by two RuvA subunits (via domain III) on 2 adjacent RuvB subunits; this complex drives branch migration. In the full resolvosome a probable DNA-RuvA(4)-RuvB(12)-RuvC(2) complex forms which resolves the HJ.

It localises to the cytoplasm. The RuvA-RuvB-RuvC complex processes Holliday junction (HJ) DNA during genetic recombination and DNA repair, while the RuvA-RuvB complex plays an important role in the rescue of blocked DNA replication forks via replication fork reversal (RFR). RuvA specifically binds to HJ cruciform DNA, conferring on it an open structure. The RuvB hexamer acts as an ATP-dependent pump, pulling dsDNA into and through the RuvAB complex. HJ branch migration allows RuvC to scan DNA until it finds its consensus sequence, where it cleaves and resolves the cruciform DNA. This chain is Holliday junction branch migration complex subunit RuvA, found in Synechocystis sp. (strain ATCC 27184 / PCC 6803 / Kazusa).